A 449-amino-acid chain; its full sequence is uncharacterized protein (449 aa).

Ser-420 is subject to Phosphoserine.

Belongs to the NAD kinase family.

It is found in the cytoplasm. Its subcellular location is the nucleus. This is an uncharacterized protein from Schizosaccharomyces pombe (strain 972 / ATCC 24843) (Fission yeast).